Here is a 198-residue protein sequence, read N- to C-terminus: dCTP deaminase (198 aa).

Residues 110–115, aspartate 128, 136–138, tyrosine 171, lysine 178, and glutamine 182 each bind dCTP; these read RSSLAR and VLE. The Proton donor/acceptor role is filled by glutamate 138. Residues 168–198 are disordered; that stretch reads ARPYNKREDAKYRDQKGAVASRISQDEKVNK. Over residues 172–183 the composition is skewed to basic and acidic residues; that stretch reads NKREDAKYRDQK.

This sequence belongs to the dCTP deaminase family. As to quaternary structure, homotrimer.

It carries out the reaction dCTP + H2O + H(+) = dUTP + NH4(+). Its pathway is pyrimidine metabolism; dUMP biosynthesis; dUMP from dCTP (dUTP route): step 1/2. Functionally, catalyzes the deamination of dCTP to dUTP. The sequence is that of dCTP deaminase from Colwellia psychrerythraea (strain 34H / ATCC BAA-681) (Vibrio psychroerythus).